Reading from the N-terminus, the 180-residue chain is Epididymal-specific lipocalin-6 (180 aa).

An N-terminal signal peptide occupies residues 1 to 20; the sequence is MGGLLLAALLALVAVPRAQA. An intrachain disulfide couples Cys-81 to Cys-174.

This sequence belongs to the calycin superfamily. Lipocalin family.

The protein resides in the secreted. Its function is as follows. May play a role in male fertility. The sequence is that of Epididymal-specific lipocalin-6 (LCN6) from Macaca mulatta (Rhesus macaque).